Here is a 403-residue protein sequence, read N- to C-terminus: MPKIIDAKVIITCPGRNFVTLKIMTDEGVYGLGDATLNGRELAVASYLTDHVIPCLIGRDAHRIEDLWQYLYKGAYWRRGPVTMTAIAAVDMALWDIKGKIAGLPVYQLLGGASREGVMVYGHANGTTIEDTVKVALDYQAQGYKAIRLQCGVPGMASTYGVSKDKYFYEPADADLPTENIWNTSKYLRIVPELFKAARESLGWDVHLLHDIHHRLTPIEAGRLGQDLEPYRPFWLEDATPAENQEAFRLIRQHTTAPLAVGEIFNSIWDAKDLIQNQLIDYIRATVVHAGGITHLRRIAALADLYQIRTGCHGATDLSPVCMAAALHFDLSVPNFGIQEYMRHMPETDAVFPHAYTFADGMMHPGDQPGLGVDIDEDLAAGYEYKRAFLPVNRLEDGTMFNW.

Residues N38 and H123 each contribute to the substrate site. The active-site Proton donor/acceptor is the Y160. D211 lines the Mg(2+) pocket. H213 serves as the catalytic Proton donor/acceptor. Residues E237 and E263 each contribute to the Mg(2+) site. 5 residues coordinate substrate: E263, R284, H313, D317, and E340.

The protein belongs to the mandelate racemase/muconate lactonizing enzyme family. GalD subfamily. It depends on Mg(2+) as a cofactor.

It catalyses the reaction D-mannonate = 2-dehydro-3-deoxy-D-gluconate + H2O. It participates in carbohydrate metabolism; pentose and glucuronate interconversion. In terms of biological role, catalyzes the dehydration of D-mannonate. Has no detectable activity with a panel of 70 other acid sugars (in vitro). The polypeptide is D-mannonate dehydratase (Sphingomonas sp. (strain SKA58)).